The sequence spans 238 residues: Ribonuclease PH (238 aa).

Residues R86 and 124 to 126 each bind phosphate; that span reads GTR.

Belongs to the RNase PH family. In terms of assembly, homohexameric ring arranged as a trimer of dimers.

It carries out the reaction tRNA(n+1) + phosphate = tRNA(n) + a ribonucleoside 5'-diphosphate. Its function is as follows. Phosphorolytic 3'-5' exoribonuclease that plays an important role in tRNA 3'-end maturation. Removes nucleotide residues following the 3'-CCA terminus of tRNAs; can also add nucleotides to the ends of RNA molecules by using nucleoside diphosphates as substrates, but this may not be physiologically important. Probably plays a role in initiation of 16S rRNA degradation (leading to ribosome degradation) during starvation. This is Ribonuclease PH from Dichelobacter nodosus (strain VCS1703A).